The primary structure comprises 251 residues: Cell division protein ZapD (251 aa).

It belongs to the ZapD family. As to quaternary structure, interacts with FtsZ.

The protein resides in the cytoplasm. Functionally, cell division factor that enhances FtsZ-ring assembly. Directly interacts with FtsZ and promotes bundling of FtsZ protofilaments, with a reduction in FtsZ GTPase activity. The polypeptide is Cell division protein ZapD (Burkholderia multivorans (strain ATCC 17616 / 249)).